The chain runs to 871 residues: Dual O-methyltransferase/FAD-dependent monooxygenase CTB3 (871 aa).

The segment at 1–429 is O-methyltransferase; that stretch reads MMQFQRDLEA…GLLTVRSAGQ (429 aa). D279 provides a ligand contact to S-adenosyl-L-methionine. Residue H331 is the Proton acceptor of the active site. The FAD-dependent monooxygenase stretch occupies residues 430 to 871; the sequence is TALSGTNTLT…NLVDCSEFVF (442 aa). The FAD site is built by E485, R569, and A806.

It in the C-terminal section; belongs to the paxM FAD-dependent monooxygenase family. This sequence in the N-terminal section; belongs to the class I-like SAM-binding methyltransferase superfamily. Cation-independent O-methyltransferase family. COMT subfamily.

The enzyme catalyses nor-toralactone + S-adenosyl-L-methionine = toralactone + S-adenosyl-L-homocysteine + H(+). It carries out the reaction toralactone + NADH + O2 + H(+) = 1-(3,4,5-trihydroxy-7-methoxynaphthalen-2-yl)propan-2-one + CO2 + NAD(+). Its pathway is mycotoxin biosynthesis. Functionally, dual O-methyltransferase/FAD-dependent monooxygenase; part of the gene cluster that mediates the biosynthesis of cercosporin, a light-activated, non-host-selective toxin. The perylenequinone chromophore of cercosporin absorbs light energy to attain an electronically-activated triplet state and produces active oxygen species such as the hydroxyl radical, superoxide, hydrogen peroxide or singlet oxygen upon reaction with oxygen molecules. These reactive oxygen species cause damage to various cellular components including lipids, proteins and nucleic acids. The first step of cercosporin biosynthesis is performed by the polyketide synthase CTB1 which catalyzes the formation of nor-toralactone. The starter unit acyltransferase (SAT) domain of CTB1 initiates polyketide extension by the selective utilization of acetyl-CoA, which is elongated to the heptaketide in the beta-ketoacyl synthase (KS) domain by successive condensations with six malonyl units introduced by the malonyl acyltransferase (MAT) domain. The product template (PT) domain catalyzes C4-C9 and C2-C11 aldol cyclizations and dehydrations to a trihydroxynaphthalene, which is thought to be delivered to the thioesterase (TE) domain for product release. The bifunctional enzyme CTB3 then methylates nor-toralactone to toralactone before conducting an unusual oxidative aromatic ring opening. The O-methyltransferase CTB2 further methylates the nascent OH-6 of the CBT3 product, blocking further oxidation at this site before the reductase CTB6 reduces the 2-oxopropyl ketone at position C7, giving naphthalene. The FAD-dependent monooxygenase CTB5 in concert with the multicopper oxidase CTB12 are responsible for homodimerization of naphthalene with CTB7 installing the dioxepine moiety, finally producing cercosporin. The fasciclin domain-containing protein CTB11 might act with CTB5 and CTB12 whereas the roles of CTB9 and CTB10 have still to be elucidated. In Cercospora nicotianae (Barn spot disease fungus), this protein is Dual O-methyltransferase/FAD-dependent monooxygenase CTB3.